The chain runs to 154 residues: Myoglobin (154 aa).

Residues Gly2–Lys148 form the Globin domain. Ser4 carries the phosphoserine modification. Residue His65 participates in nitrite binding. His65 is a binding site for O2. Residue Thr68 is modified to Phosphothreonine. His94 provides a ligand contact to heme b.

It belongs to the globin family. As to quaternary structure, monomeric.

It localises to the cytoplasm. The protein resides in the sarcoplasm. It carries out the reaction Fe(III)-heme b-[protein] + nitric oxide + H2O = Fe(II)-heme b-[protein] + nitrite + 2 H(+). The enzyme catalyses H2O2 + AH2 = A + 2 H2O. In terms of biological role, monomeric heme protein which primary function is to store oxygen and facilitate its diffusion within muscle tissues. Reversibly binds oxygen through a pentacoordinated heme iron and enables its timely and efficient release as needed during periods of heightened demand. Depending on the oxidative conditions of tissues and cells, and in addition to its ability to bind oxygen, it also has a nitrite reductase activity whereby it regulates the production of bioactive nitric oxide. Under stress conditions, like hypoxia and anoxia, it also protects cells against reactive oxygen species thanks to its pseudoperoxidase activity. The chain is Myoglobin (MB) from Sus scrofa (Pig).